Reading from the N-terminus, the 222-residue chain is MTLEFSGLGLAPEFVDYQHAWDVQRELHGKVVAGEAPSTVLLLEHAAVYTAGKLTEDHERPFDGTPVVAVDRGGKLTWHGPGQLIAYPILKLKNRAGIRDYVERLEAVMIAVMADYGIRAERIKGRAGVWVKADANGPDRKIAAIGIRVLNGVTMHGVAINCSNDLAPYGQIIACGITDAGVTTMSRETGKDIRPADIAERFVEEFRKHEEALVSSPEGALL.

Positions 34-214 (GEAPSTVLLL…EFRKHEEALV (181 aa)) constitute a BPL/LPL catalytic domain. Residues 72-79 (RGGKLTWH), 144-146 (AIG), and 157-159 (GVA) contribute to the substrate site. C175 serves as the catalytic Acyl-thioester intermediate.

It belongs to the LipB family.

The protein resides in the cytoplasm. It carries out the reaction octanoyl-[ACP] + L-lysyl-[protein] = N(6)-octanoyl-L-lysyl-[protein] + holo-[ACP] + H(+). It participates in protein modification; protein lipoylation via endogenous pathway; protein N(6)-(lipoyl)lysine from octanoyl-[acyl-carrier-protein]: step 1/2. Functionally, catalyzes the transfer of endogenously produced octanoic acid from octanoyl-acyl-carrier-protein onto the lipoyl domains of lipoate-dependent enzymes. Lipoyl-ACP can also act as a substrate although octanoyl-ACP is likely to be the physiological substrate. This chain is Octanoyltransferase, found in Pseudarthrobacter chlorophenolicus (strain ATCC 700700 / DSM 12829 / CIP 107037 / JCM 12360 / KCTC 9906 / NCIMB 13794 / A6) (Arthrobacter chlorophenolicus).